The primary structure comprises 185 residues: Elongation factor P (185 aa).

It belongs to the elongation factor P family.

The protein resides in the cytoplasm. It functions in the pathway protein biosynthesis; polypeptide chain elongation. In terms of biological role, involved in peptide bond synthesis. Stimulates efficient translation and peptide-bond synthesis on native or reconstituted 70S ribosomes in vitro. Probably functions indirectly by altering the affinity of the ribosome for aminoacyl-tRNA, thus increasing their reactivity as acceptors for peptidyl transferase. The polypeptide is Elongation factor P (Streptococcus equi subsp. equi (strain 4047)).